The primary structure comprises 609 residues: Myoneurin (609 aa).

The 66-residue stretch at 24-89 folds into the BTB domain; sequence CDCTILIGDF…IYSGNLNYDS (66 aa). 2 consecutive short sequence motifs (nuclear localization signal) follow at residues 172 to 188 and 257 to 262; these read KKSQ…RSHQ and QKPAKL. C2H2-type zinc fingers lie at residues 301–323, 329–351, 357–380, 386–408, 414–436, 442–464, 470–492, and 498–521; these read PVCN…MRIH, YVCH…VRTH, YQCK…RMHH, YKCD…ARKH, YVCD…VRRH, YVCD…ARKH, YICG…FRSH, and FVCE…LKMH. The tract at residues 528 to 553 is disordered; that stretch reads IEMKSAENSSSSEDSTTKSPEPESLE. A compositionally biased stretch (low complexity) spans 533–546; it reads AENSSSSEDSTTKS.

Its subcellular location is the nucleus. This chain is Myoneurin (mynn), found in Xenopus laevis (African clawed frog).